Here is a 517-residue protein sequence, read N- to C-terminus: Crotonobetaine/carnitine--CoA ligase (517 aa).

The protein belongs to the ATP-dependent AMP-binding enzyme family.

It carries out the reaction 4-(trimethylamino)butanoate + ATP + CoA = 4-(trimethylamino)butanoyl-CoA + AMP + diphosphate. The catalysed reaction is crotonobetaine + ATP + CoA = crotonobetainyl-CoA + AMP + diphosphate. The enzyme catalyses (R)-carnitine + ATP + CoA = (R)-carnitinyl-CoA + AMP + diphosphate. The protein operates within amine and polyamine metabolism; carnitine metabolism. In terms of biological role, catalyzes the transfer of CoA to carnitine, generating the initial carnitinyl-CoA needed for the CaiB reaction cycle. Also has activity toward crotonobetaine and gamma-butyrobetaine. This chain is Crotonobetaine/carnitine--CoA ligase, found in Salmonella paratyphi C (strain RKS4594).